Here is a 117-residue protein sequence, read N- to C-terminus: Ubiquitin-like protein 3 (117 aa).

Residues 10-88 (INLRLILVSG…PFGKTTVMHL (79 aa)) enclose the Ubiquitin-like domain. Cys-113 carries S-palmitoyl cysteine lipidation. Residue Cys-114 is modified to Cysteine methyl ester. Cys-114 carries S-geranylgeranyl cysteine lipidation. A propeptide spans 115–117 (VIL) (removed in mature form).

The protein resides in the cell membrane. The protein is Ubiquitin-like protein 3 (UBL3) of Bos taurus (Bovine).